Reading from the N-terminus, the 729-residue chain is Bromo and FHA domain-containing protein DDB_G0267958 (729 aa).

Positions Leu-46–Thr-79 are enriched in low complexity. The segment at Leu-46 to Ala-83 is disordered. The region spanning Leu-112–Phe-167 is the FHA domain. Composition is skewed to low complexity over residues Ile-208–Ile-221, Pro-229–Thr-275, and Pro-283–Lys-306. 2 disordered regions span residues Ile-208–Lys-361 and Ser-403–Pro-442. Residues Asp-310–Val-341 show a composition bias toward acidic residues. Positions Asp-315–Lys-352 form a coiled coil. Residues Pro-406 to Lys-431 are compositionally biased toward low complexity. The region spanning Ser-498–Ser-617 is the Bromo domain. The stretch at Ser-659–Asp-718 forms a coiled coil. The segment at Ser-659–Gln-729 is disordered. A compositionally biased stretch (acidic residues) spans Gln-668–Gln-729.

The chain is Bromo and FHA domain-containing protein DDB_G0267958 from Dictyostelium discoideum (Social amoeba).